The sequence spans 1026 residues: Beta-galactosidase (1026 aa).

2 residues coordinate substrate: Asn-104 and Asp-203. Asp-203 contributes to the Na(+) binding site. The Mg(2+) site is built by Glu-418, His-420, and Glu-463. Residues Glu-463 and 539-542 (EYAH) contribute to the substrate site. The Proton donor role is filled by Glu-463. The active-site Nucleophile is Glu-539. Residue Asn-599 coordinates Mg(2+). Positions 603 and 606 each coordinate Na(+). The substrate site is built by Asn-606 and Trp-1002.

Belongs to the glycosyl hydrolase 2 family. As to quaternary structure, homotetramer. Mg(2+) serves as cofactor. Requires Na(+) as cofactor.

The enzyme catalyses Hydrolysis of terminal non-reducing beta-D-galactose residues in beta-D-galactosides.. This Erwinia tasmaniensis (strain DSM 17950 / CFBP 7177 / CIP 109463 / NCPPB 4357 / Et1/99) protein is Beta-galactosidase.